The following is a 266-amino-acid chain: MENSNNTNIFIIFLSFLMIVLSITSIELPWQRIFLSGKFLGMKIFDLTVDHELFDSGIYYPTRLNEVWIEITSNSINNGIMTCMGINILSLVIILINPFKRFFKFISDSHYLFIEKILIRSLSVMIVIFYILSTTIGLMLSGTYCQVTKSSFDSTDGSTLSDESCYSLDMFSKSHIQDLVIRSTEVSSKPMKGWYLSIVLLFLSLILAVMVFIRFKRISPKLVDLGYRHYLTNNKSSSNNDTGSEVIGLSSNESDNIATVEIEPLL.

A run of 4 helical transmembrane segments spans residues 9-29 (IFIIFLSFLMIVLSITSIELP), 79-99 (GIMTCMGINILSLVIILINPF), 122-142 (LSVMIVIFYILSTTIGLMLSG), and 193-213 (GWYLSIVLLFLSLILAVMVFI).

It is found in the membrane. This is an uncharacterized protein from Dictyostelium discoideum (Social amoeba).